The primary structure comprises 481 residues: Argininosuccinate lyase (481 aa).

It belongs to the lyase 1 family. Argininosuccinate lyase subfamily.

It localises to the cytoplasm. It carries out the reaction 2-(N(omega)-L-arginino)succinate = fumarate + L-arginine. The protein operates within amino-acid biosynthesis; L-arginine biosynthesis; L-arginine from L-ornithine and carbamoyl phosphate: step 3/3. This chain is Argininosuccinate lyase, found in Methanococcus vannielii (strain ATCC 35089 / DSM 1224 / JCM 13029 / OCM 148 / SB).